Consider the following 686-residue polypeptide: MLSKVVLLVALAAICGAQGASYAGRHTADMDFLHKQKKIFDLLLYVRQADLSDAEWYDVGRNYDMESNMDMYKDKNVVQKFLWWYKQGMFLSRNAIFTPLNSEQKYEVRMLFELLYNAKDFQTFYKTAAWARLRMNSGMFTTAFSIAVLYRPDTKYMKFPAIYEIYPNYFFDSSVIEEAQNLKMSRGSSVVTGMNNIETYIVNTNYSSKNMREYNDPEYKLDYFMEDVELNAYYYYMREMLPYWMSSSQYHMPKEIRGQLYYFLHKQLMTRYFLERMSNDLGKTAEFDWNKPINSGFYSTIMYSNGVTFPQRNRFSSLPYYKYKYLNVINALEMRLMDAIDSGYLIDEYGKKIDIYTPEGLNMLGNVIEGSSDSINTKFYGMYDILARDILGYNFDFQNKNNLIPSALQSYSTSMRDPAFYMLYQNILSYFLRYKKLQPQYSQSELQMPGVKFESVNIDKLYTYFDKCDTLINNAVAVENFKGGMYLRLKARRACMNYERFTYKININSDKETKGMMRIFLGPAFDEIKHDMVYLQKYFYLFMEMDRFAVTLRPGSNSIERQSSESPFTTSTIMPSDIFYDKLNKAIGGSEPFTYSEKMLGFPERLILPRGKPEGMRYKMFFFLSSMDESNTKSYEIPLYGKMTLDDKVFGFPLDRPMWAWNFTIPNMYFKDVFIYNRPNEESMNY.

Positions 1–19 are cleaved as a signal peptide; sequence MLSKVVLLVALAAICGAQG. In terms of domain architecture, Hemocyanin N-terminal spans 32–155; it reads FLHKQKKIFD…IAVLYRPDTK (124 aa). The Hemocyanin middle domain maps to 161–431; it reads AIYEIYPNYF…MLYQNILSYF (271 aa). 2 N-linked (GlcNAc...) asparagine glycosylation sites follow: N205 and N662. The Hemocyanin C-terminal domain maps to 440–676; it reads QYSQSELQMP…NMYFKDVFIY (237 aa).

Belongs to the hemocyanin/hexamerin family. In terms of assembly, probable homohexamer. In terms of tissue distribution, expressed in the fat body and secreted into the hemolymph (at protein level). Present in trophocytes and oenocytes of the fat body (at protein level). Not expressed in ovary or testis.

The protein localises to the secreted. Its subcellular location is the nucleus. It is found in the cytoplasm. It localises to the cytoplasmic granule. Functionally, storage protein that may function as a nutrient supply to compensate for lack of dietary proteins during metamorphosis and egg production. This Apis mellifera (Honeybee) protein is Hexamerin 70c.